The following is a 414-amino-acid chain: DNA primase small subunit PriS (414 aa).

Active-site residues include aspartate 98, aspartate 100, and aspartate 312.

This sequence belongs to the eukaryotic-type primase small subunit family. In terms of assembly, heterodimer of a small subunit (PriS) and a large subunit (PriL). Requires Mg(2+) as cofactor. The cofactor is Mn(2+).

Catalytic subunit of DNA primase, an RNA polymerase that catalyzes the synthesis of short RNA molecules used as primers for DNA polymerase during DNA replication. The small subunit contains the primase catalytic core and has DNA synthesis activity on its own. Binding to the large subunit stabilizes and modulates the activity, increasing the rate of DNA synthesis while decreasing the length of the DNA fragments, and conferring RNA synthesis capability. The DNA polymerase activity may enable DNA primase to also catalyze primer extension after primer synthesis. May also play a role in DNA repair. The chain is DNA primase small subunit PriS from Methanosarcina mazei (strain ATCC BAA-159 / DSM 3647 / Goe1 / Go1 / JCM 11833 / OCM 88) (Methanosarcina frisia).